We begin with the raw amino-acid sequence, 81 residues long: ATP synthase subunit c (81 aa).

The next 2 membrane-spanning stretches (helical) occupy residues 5 to 25 (IAAG…IGAG) and 57 to 77 (VGLV…FVFA).

This sequence belongs to the ATPase C chain family. F-type ATPases have 2 components, F(1) - the catalytic core - and F(0) - the membrane proton channel. F(1) has five subunits: alpha(3), beta(3), gamma(1), delta(1), epsilon(1). F(0) has three main subunits: a(1), b(2) and c(10-14). The alpha and beta chains form an alternating ring which encloses part of the gamma chain. F(1) is attached to F(0) by a central stalk formed by the gamma and epsilon chains, while a peripheral stalk is formed by the delta and b chains.

The protein localises to the cell membrane. F(1)F(0) ATP synthase produces ATP from ADP in the presence of a proton or sodium gradient. F-type ATPases consist of two structural domains, F(1) containing the extramembraneous catalytic core and F(0) containing the membrane proton channel, linked together by a central stalk and a peripheral stalk. During catalysis, ATP synthesis in the catalytic domain of F(1) is coupled via a rotary mechanism of the central stalk subunits to proton translocation. In terms of biological role, key component of the F(0) channel; it plays a direct role in translocation across the membrane. A homomeric c-ring of between 10-14 subunits forms the central stalk rotor element with the F(1) delta and epsilon subunits. The chain is ATP synthase subunit c from Mycolicibacterium gilvum (strain PYR-GCK) (Mycobacterium gilvum (strain PYR-GCK)).